The chain runs to 402 residues: Speedy protein E5 (402 aa).

The disordered stretch occupies residues 1-89; that stretch reads MDRTETRFRK…EEPEKELAPE (89 aa). Residues 16-39 show a composition bias toward polar residues; sequence EKITTSRQPQPQNEQSPQRSTSGY. The span at 76–89 shows a compositional bias: acidic residues; that stretch reads DESAEEPEKELAPE.

It belongs to the Speedy/Ringo family.

The polypeptide is Speedy protein E5 (SPDYE5) (Homo sapiens (Human)).